The chain runs to 336 residues: uncharacterized protein (336 aa).

Positions 196–222 (YKEGDDSNWDDFGSESEDDSKEAHSEE) are disordered. A compositionally biased stretch (acidic residues) spans 201–215 (DSNWDDFGSESEDDS). S211 is modified (phosphoserine).

This is an uncharacterized protein from Schizosaccharomyces pombe (strain 972 / ATCC 24843) (Fission yeast).